We begin with the raw amino-acid sequence, 804 residues long: Probable replication endonuclease from prophage-like region (804 aa).

Active-site O-(5'-phospho-DNA)-tyrosine intermediate residues include Y498 and Y502.

This sequence belongs to the phage GPA family.

Its function is as follows. Possible endonuclease which induces a single-strand cut and initiates DNA replication. The protein is Probable replication endonuclease from prophage-like region of Escherichia coli O6:H1 (strain CFT073 / ATCC 700928 / UPEC).